Consider the following 64-residue polypeptide: MFKLLVVVFAALFAAALAVPAPVARANPAPIPIASPEPAPQYYYGASPYAYSGGYYDSPYSYYG.

The first 18 residues, 1–18 (MFKLLVVVFAALFAAALA), serve as a signal peptide directing secretion. Propeptides lie at residues 19 to 40 (VPAP…EPAP) and 63 to 64 (YG).

The protein resides in the secreted. This chain is Neuropeptide-like 4 (Nplp4), found in Drosophila melanogaster (Fruit fly).